Consider the following 385-residue polypeptide: MAALSGVRWLTRALVSAGNPGAWRGLSTSAAAHAASRSQAEDVRVEGSFPVTMLPGDGVGPELMHAVKEVFKAAAVPVEFQEHHLSEVQNMASEEKLEQVLSSMKENKVAIIGKIHTPMEYKGELASYDMRLRRKLDLFANVVHVKSLPGYMTRHNNLDLVIIREQTEGEYSSLEHESARGVIECLKIVTRAKSQRIAKFAFDYATKKGRGKVTAVHKANIMKLGDGLFLQCCEEVAELYPKIKFETMIIDNCCMQLVQNPYQFDVLVMPNLYGNIIDNLAAGLVGGAGVVPGESYSAEYAVFETGARHPFAQAVGRNIANPTAMLLSASNMLRHLNLEYHSSMIADAVKKVIKVGKVRTRDMGGYSTTTDFIKSVIGHLQTKGS.

Residues 1–34 constitute a mitochondrion transit peptide; sequence MAALSGVRWLTRALVSAGNPGAWRGLSTSAAAHA. K199 carries the N6-acetyllysine modification.

It belongs to the isocitrate and isopropylmalate dehydrogenases family. As to quaternary structure, heterooligomer of subunits alpha (IDH3A), beta (IDH3B), and gamma (IDH3G) in the apparent ratio of 2:1:1. The heterodimer containing one IDH3A and one IDH3B subunit and the heterodimer containing one IDH3A and one IDH3G subunit assemble into a heterotetramer (which contains two subunits of IDH3A, one of IDH3B and one of IDH3G) and further into the heterooctamer.

Its subcellular location is the mitochondrion. The heterotetramer and the heterodimer composed of IDH3A and IDH3G subunits can be allosterically activated by citrate (CIT) or/and ADP, and the two activators can act independently or synergistically. The heterodimer composed of IDH3A and IDH3B subunits cannot be allosterically regulated and the allosteric regulation of the heterotetramer is through the IDH3G subunit and not the IDH3B subunit. The IDH3G subunit contains the allosteric site which consists of a CIT-binding site and an ADP-binding site, and the binding of CIT and ADP causes conformational changes at the allosteric site which are transmitted to the active site in the catalytic subunit (IDH3A) through a cascade of conformational changes at the heterodimer interface, leading to stabilization of the isocitrate-binding at the active site and thus activation of the enzyme. ATP can activate the heterotetramer and the heterodimer composed of IDH3A and IDH3G subunits at low concentrations but inhibits their activities at high concentrations, whereas ATP exhibits only inhibitory effect on the heterodimer composed of IDH3A and IDH3B subunits. In terms of biological role, plays a structural role to facilitate the assembly and ensure the full activity of the enzyme catalyzing the decarboxylation of isocitrate (ICT) into alpha-ketoglutarate. The heterodimer composed of the alpha (IDH3A) and beta (IDH3B) subunits and the heterodimer composed of the alpha (IDH3A) and gamma (IDH3G) subunits, have considerable basal activity but the full activity of the heterotetramer (containing two subunits of IDH3A, one of IDH3B and one of IDH3G) requires the assembly and cooperative function of both heterodimers. The sequence is that of Isocitrate dehydrogenase [NAD] subunit beta, mitochondrial (IDH3B) from Homo sapiens (Human).